The chain runs to 211 residues: Lysozyme g (211 aa).

An N-terminal signal peptide occupies residues 1-26; it reads MLGKNDPMCLVLVLLGLTALLGICQG. Disulfide bonds link cysteine 30–cysteine 86 and cysteine 44–cysteine 55. Catalysis depends on residues glutamate 99 and aspartate 112.

This sequence belongs to the glycosyl hydrolase 23 family. Granulocyte compartment of myelomonocytic cells.

The protein resides in the secreted. The catalysed reaction is Hydrolysis of (1-&gt;4)-beta-linkages between N-acetylmuramic acid and N-acetyl-D-glucosamine residues in a peptidoglycan and between N-acetyl-D-glucosamine residues in chitodextrins.. The chain is Lysozyme g from Gallus gallus (Chicken).